A 302-amino-acid polypeptide reads, in one-letter code: Succinate--CoA ligase [ADP-forming] subunit alpha (302 aa).

CoA-binding positions include 17–20 (TGST), Lys43, and 96–98 (ITE). Tyr159 provides a ligand contact to substrate. The active-site Tele-phosphohistidine intermediate is the His247.

The protein belongs to the succinate/malate CoA ligase alpha subunit family. As to quaternary structure, heterotetramer of two alpha and two beta subunits.

The catalysed reaction is succinate + ATP + CoA = succinyl-CoA + ADP + phosphate. It catalyses the reaction GTP + succinate + CoA = succinyl-CoA + GDP + phosphate. Its pathway is carbohydrate metabolism; tricarboxylic acid cycle; succinate from succinyl-CoA (ligase route): step 1/1. Its function is as follows. Succinyl-CoA synthetase functions in the citric acid cycle (TCA), coupling the hydrolysis of succinyl-CoA to the synthesis of either ATP or GTP and thus represents the only step of substrate-level phosphorylation in the TCA. The alpha subunit of the enzyme binds the substrates coenzyme A and phosphate, while succinate binding and nucleotide specificity is provided by the beta subunit. The chain is Succinate--CoA ligase [ADP-forming] subunit alpha from Staphylococcus aureus (strain MRSA252).